An 858-amino-acid polypeptide reads, in one-letter code: Bifunctional uridylyltransferase/uridylyl-removing enzyme (858 aa).

The uridylyltransferase stretch occupies residues 1–324; it reads MSAHAAPSPE…PATSGITRVL (324 aa). The interval 325–681 is uridylyl-removing; it reads SPDRFVEKQG…ARPSPIGDAL (357 aa). The HD domain maps to 443–565; the sequence is VDQHILMVLR…VGNERYLTAL (123 aa). ACT domains follow at residues 682–761 and 790–858; these read QVLV…PEPS and ILSV…AIAV.

It belongs to the GlnD family. Requires Mg(2+) as cofactor.

The catalysed reaction is [protein-PII]-L-tyrosine + UTP = [protein-PII]-uridylyl-L-tyrosine + diphosphate. It carries out the reaction [protein-PII]-uridylyl-L-tyrosine + H2O = [protein-PII]-L-tyrosine + UMP + H(+). With respect to regulation, uridylyltransferase (UTase) activity is inhibited by glutamine, while glutamine activates uridylyl-removing (UR) activity. Functionally, modifies, by uridylylation and deuridylylation, the PII regulatory proteins (GlnB and homologs), in response to the nitrogen status of the cell that GlnD senses through the glutamine level. Under low glutamine levels, catalyzes the conversion of the PII proteins and UTP to PII-UMP and PPi, while under higher glutamine levels, GlnD hydrolyzes PII-UMP to PII and UMP (deuridylylation). Thus, controls uridylylation state and activity of the PII proteins, and plays an important role in the regulation of nitrogen fixation and metabolism. The protein is Bifunctional uridylyltransferase/uridylyl-removing enzyme of Burkholderia lata (strain ATCC 17760 / DSM 23089 / LMG 22485 / NCIMB 9086 / R18194 / 383).